The chain runs to 513 residues: Noroxomaritidine synthase (513 aa).

Residues 14-34 (HYPEILIAIACFLIFSLLLSA) form a helical membrane-spanning segment. Cys-458 is a binding site for heme.

Belongs to the cytochrome P450 family. It depends on heme as a cofactor.

Its subcellular location is the membrane. It catalyses the reaction 4'-O-methylnorbelladine + reduced [NADPH--hemoprotein reductase] + O2 = (10bS,4aR)-noroxomaritidine + oxidized [NADPH--hemoprotein reductase] + 2 H2O + H(+). The catalysed reaction is 4'-O-methylnorbelladine + reduced [NADPH--hemoprotein reductase] + O2 = (10bR,4aS)-noroxomaritidine + oxidized [NADPH--hemoprotein reductase] + 2 H2O + H(+). It participates in alkaloid biosynthesis. In terms of biological role, cytochrome P450 that catalyzes an intramolecular para-para' C-C phenol coupling of 4'-O-methylnorbelladine in alkaloids biosynthesis, including haemanthamine- and crinamine-type alkaloids, promising anticancer agents. Catalyzes the formation of (10bR,4aS)-noroxomaritidine and (10bS,4aR)-noroxomaritidine from 4'-O-methylnorbelladine. Also produces N-demethylnarwedine as a minor product. Involved in the biosynthesis of haemanthamine. Can also use 4'-O-methyl-N-methylnorbelladine, (S)- and (R)-coclaurine as substrates, but not 3'-O-methylnorbelladine, 3',4'-O-dimethylnorbelladine, norbelladine, haemanthamine, (10bS,4aR)- or (10bR,4aS)-noroxomaritidine, isovanillin or tyramine. The chain is Noroxomaritidine synthase from Narcissus aff. pseudonarcissus MK-2014 (Daffodil).